A 1013-amino-acid polypeptide reads, in one-letter code: Poly [ADP-ribose] polymerase 1 (1013 aa).

Ala2 is subject to N-acetylalanine. Residues 9-93 (YRVQYAKSGR…KVKKTAEAGG (85 aa)) form a PARP-type 1 zinc finger. Residues Cys21 and Cys24 each coordinate Zn(2+). Residue Ser41 is modified to Phosphoserine. Residues His53 and Cys56 each contribute to the Zn(2+) site. N6-acetyllysine occurs at positions 97 and 105. The PARP-type 2 zinc-finger motif lies at 113 to 203 (FAAEYAKSNR…ALKKQLPAIK (91 aa)). Residues Cys125 and Cys128 each coordinate Zn(2+). At Lys131 the chain carries N6-acetyllysine. Residues His159 and Cys162 each contribute to the Zn(2+) site. Ser177, Ser179, and Ser185 each carry phosphoserine. Lys192 is covalently cross-linked (Glycyl lysine isopeptide (Lys-Gly) (interchain with G-Cter in SUMO2)). Residues 200-226 (PAIKNEGKRKGDEVDGTDEVAKKKSRK) form a disordered region. Residue Lys203 forms a Glycyl lysine isopeptide (Lys-Gly) (interchain with G-Cter in SUMO1); alternate linkage. Lys203 is covalently cross-linked (Glycyl lysine isopeptide (Lys-Gly) (interchain with G-Cter in SUMO2); alternate). The span at 204-226 (NEGKRKGDEVDGTDEVAKKKSRK) shows a compositional bias: basic and acidic residues. 2 short sequence motifs (nuclear localization signal) span residues 207–209 (KRK) and 221–226 (KKKSRK). A PADR1 zinc-binding domain is found at 225–359 (RKETDKYSKL…VKKQDRIFPP (135 aa)). Residue Lys249 forms a Glycyl lysine isopeptide (Lys-Gly) (interchain with G-Cter in SUMO2) linkage. Phosphoserine occurs at positions 274 and 277. Residues 290–332 (GALLPCKECSGQLVFKSDAYYCTGDVTAWTKCMVKTQNPSRKE) are zinc ribbon. 4 residues coordinate Zn(2+): Cys295, Cys298, Cys311, and Cys321. Positions 373–523 (VTSAPTAVNS…GVNKSEKRMK (151 aa)) are automodification domain. The BRCT domain occupies 385–476 (PADKPLSNMK…KSLQDLLSAH (92 aa)). Residue Asp387 is modified to PolyADP-ribosyl aspartic acid. A polyADP-ribosyl glutamic acid mark is found at Glu407, Glu413, Glu435, Glu437, Glu444, Glu445, Glu448, and Glu456. Lys467 participates in a covalent cross-link: Glycyl lysine isopeptide (Lys-Gly) (interchain with G-Cter in SUMO2). Residue Glu484 is modified to PolyADP-ribosyl glutamic acid. A Glycyl lysine isopeptide (Lys-Gly) (interchain with G-Cter in SUMO1); alternate cross-link involves residue Lys486. Residue Lys486 forms a Glycyl lysine isopeptide (Lys-Gly) (interchain with G-Cter in SUMO2); alternate linkage. 2 positions are modified to polyADP-ribosyl glutamic acid: Glu488 and Glu491. The disordered stretch occupies residues 489–508 (PGEVVAPRGKSAAPSKKSKG). Low complexity predominate over residues 494-503 (APRGKSAAPS). Ser499, Ser503, and Ser506 each carry ADP-ribosylserine. Residue Lys511 forms a Glycyl lysine isopeptide (Lys-Gly) (interchain with G-Cter in SUMO2) linkage. 2 positions are modified to polyADP-ribosyl glutamic acid: Glu512 and Glu513. At Ser518 the chain carries ADP-ribosylserine. Glu519 bears the PolyADP-ribosyl glutamic acid mark. Position 520 is an N6-(ADP-ribosyl)lysine (Lys520). Lys527 participates in a covalent cross-link: Glycyl lysine isopeptide (Lys-Gly) (interchain with G-Cter in SUMO2). The WGR domain occupies 541-637 (SAHVLEKGGK…KNFTKYPKKF (97 aa)). A Phosphothreonine modification is found at Thr593. Lys599 and Lys620 each carry N6-acetyllysine. One can recognise a PARP alpha-helical domain in the interval 661–778 (KSKLPKPVQE…DIEVAYSLLR (118 aa)). A Glycyl lysine isopeptide (Lys-Gly) (interchain with G-Cter in SUMO1); alternate cross-link involves residue Lys747. Residue Lys747 forms a Glycyl lysine isopeptide (Lys-Gly) (interchain with G-Cter in SUMO2); alternate linkage. A phosphoserine mark is found at Ser781 and Ser785. Positions 787-1013 (DPIDVNYEKL…LKFNFKTSLW (227 aa)) constitute a PARP catalytic domain. NAD(+) is bound by residues 861–863 (HGS), Gly870, Arg877, and Ser903. The For poly [ADP-ribose] polymerase activity role is filled by Glu987.

Belongs to the ARTD/PARP family. In terms of assembly, homodimer; PARP-type zinc-fingers from separate PARP1 molecules form a dimer module that specifically recognizes DNA strand breaks. Heterodimer; heterodimerizes with PARP2. Interacts (via the PARP catalytic domain) with HPF1. Interacts with NMNAT1. Interacts with nucleosomes; with a preference for nucleosomes containing H2A.X. Interacts with APTX. Component of a base excision repair (BER) complex, containing at least XRCC1, PARP1, PARP2, POLB and LRIG3. Interacts with SRY. The SWAP complex consists of NPM1, NCL, PARP1 and SWAP70. Interacts with TIAM2. Interacts with PARP3; leading to activate PARP1 in absence of DNA. Interacts (when poly-ADP-ribosylated) with CHD1L (via macro domain). Interacts with the DNA polymerase alpha catalytic subunit POLA1; this interaction functions as part of the control of replication fork progression. Interacts with EEF1A1 and TXK. Interacts with RNF4. Interacts with RNF146. Interacts with ZNF423. Interacts with APLF. Interacts with SNAI1 (via zinc fingers); the interaction requires SNAI1 to be poly-ADP-ribosylated and non-phosphorylated (active) by GSK3B. Interacts (when poly-ADP-ribosylated) with PARP9. Interacts with NR4A3; activates PARP1 by improving acetylation of PARP1 and suppressing the interaction between PARP1 and SIRT1. Interacts (via catalytic domain) with PUM3; the interaction inhibits the poly-ADP-ribosylation activity of PARP1 and the degradation of PARP1 by CASP3 following genotoxic stress. Interacts with ZNF365. Interacts with RRP1B. Interacts with TIMELESS; the interaction is direct. Interacts with CGAS; leading to impede the formation of the PARP1-TIMELESS complex. Interacts with KHDC3L, the interaction is increased following the formation of DNA double-strand breaks. Interacts (when auto-poly-ADP-ribosylated) with XRCC1; leading to inhibit PARP1 ADP-ribosyltransferase activity. Interacts with SPINDOC; promoting PARP1 ADP-ribosyltransferase activity. Interacts with BANF1; leading to inhibit PARP1 ADP-ribosyltransferase activity in response to oxidative DNA damage. Interacts (when sumoylated and ubiquitinated) with VCP/p97; leading to its extraction from chromatin. Interacts with YARS1; promoting PARP1 ADP-ribosyltransferase activity. Interacts with PACMP micropeptide; Interacts with PACMP micropeptide; interaction. Interacts (when poly-ADP-ribosylated) with isoform 1 of MACROH2A1; MACROH2A1 specifically binds to poly-ADP-ribose chains and inhibits PARP1 activity, limiting the consumption of nuclear NAD(+). Interacts with CARM1; promoting recruitment to replication forks. Interacts with RECQL. Interacts with ZNF32; the interaction reshapes ZNF432 interacting proteins. Interacts with TPRN; TPRN interacts with a number of DNA damage response proteins, is recruited to sites of DNA damage and may play a role in DNA damage repair. Interacts (when auto-poly-ADP-ribosylated) with AIFM1. Post-translationally, poly-ADP-ribosylated on serine, glutamate and aspartate residues by autocatalysis. Auto-ADP-ribosylation on serine takes place following interaction with HPF1. Auto poly-ADP-ribosylation on serine residues promotes its dissociation from chromatin. Poly-ADP-ribosylated by PARP2; poly-ADP-ribosylation mediates the recruitment of CHD1L to DNA damage sites. Mono-ADP-ribosylated at Lys-520 by SIRT6 in response to oxidative stress, promoting recruitment to double-strand breaks (DSBs) sites. In terms of processing, S-nitrosylated, leading to inhibit transcription regulation activity. Phosphorylated at Thr-593 by PRKDC in response to DNA damage following virus infection, promoting its translocation to the cytosol. Phosphorylated by TXK. Post-translationally, proteolytically cleaved by caspase-3 (CASP3) and caspase-7 (CASP7) in response to apoptosis to generate the Poly [ADP-ribose] polymerase 1, processed N-terminus and Poly [ADP-ribose] polymerase 1, processed C-terminus forms. In terms of processing, sumoylated with SUMO1 or SUMO2 by PIAS4 following prolonged residence (trapping) to chromatin. Sumoylation promotes ubiquitination by RNF4 and removal from chromatin by VCP/p97. Ubiquitinated by RNF4 following sumoylation by PIAS4 in response to prolonged residence (trapping) to chromatin. Ubiquitination promotes removal from chromatin by VCP/p97. In terms of tissue distribution, widely expressed. Expression is correlated with proliferation, with higher levels occurring during early fetal development and organogenesis and in the highly proliferative cell compartments of adult. Expressed in B-cells that have been induced to switch to various Ig isotypes.

It localises to the chromosome. The protein localises to the nucleus. The protein resides in the nucleolus. Its subcellular location is the cytoplasm. It is found in the cytosol. The catalysed reaction is NAD(+) + (ADP-D-ribosyl)n-acceptor = nicotinamide + (ADP-D-ribosyl)n+1-acceptor + H(+).. It carries out the reaction L-seryl-[protein] + NAD(+) = O-(ADP-D-ribosyl)-L-seryl-[protein] + nicotinamide + H(+). The enzyme catalyses L-aspartyl-[protein] + NAD(+) = 4-O-(ADP-D-ribosyl)-L-aspartyl-[protein] + nicotinamide. It catalyses the reaction L-glutamyl-[protein] + NAD(+) = 5-O-(ADP-D-ribosyl)-L-glutamyl-[protein] + nicotinamide. The catalysed reaction is L-tyrosyl-[protein] + NAD(+) = O-(ADP-D-ribosyl)-L-tyrosyl-[protein] + nicotinamide + H(+). It carries out the reaction L-histidyl-[protein] + NAD(+) = N(tele)-(ADP-D-ribosyl)-L-histidyl-[protein] + nicotinamide + H(+). With respect to regulation, ADP-ribosyltransferase activity is regulated via an allosteric activation mechanism. In absence of activation signal, PARP1 is autoinhibited by the PARP alpha-helical domain (also named HD region), which prevents effective NAD(+)-binding. Activity is highly stimulated by signals, such as DNA strand breaks. Binding to damaged DNA unfolds the PARP alpha-helical domain, relieving autoinhibition. Poly-ADP-ribosyltransferase activity is tightly regulated and PARP1 is removed from damaged chromatin following initial poly-ADP-ribosylation of chromatin to avoid prolonged residence (trapping) that has cytotoxic consequences. A number of factors (VCP/p97) or post-translational modifications (auto-poly-ADP-ribosylation or ubiquitination) promote PARP1 removal from chromatin. Its function is as follows. Poly-ADP-ribosyltransferase that mediates poly-ADP-ribosylation of proteins and plays a key role in DNA repair. Mediates glutamate, aspartate, serine, histidine or tyrosine ADP-ribosylation of proteins: the ADP-D-ribosyl group of NAD(+) is transferred to the acceptor carboxyl group of target residues and further ADP-ribosyl groups are transferred to the 2'-position of the terminal adenosine moiety, building up a polymer with an average chain length of 20-30 units. Serine ADP-ribosylation of proteins constitutes the primary form of ADP-ribosylation of proteins in response to DNA damage. Specificity for the different amino acids is conferred by interacting factors, such as HPF1 and NMNAT1. Following interaction with HPF1, catalyzes serine ADP-ribosylation of target proteins; HPF1 confers serine specificity by completing the PARP1 active site. Also catalyzes tyrosine ADP-ribosylation of target proteins following interaction with HPF1. Following interaction with NMNAT1, catalyzes glutamate and aspartate ADP-ribosylation of target proteins; NMNAT1 confers glutamate and aspartate specificity. PARP1 initiates the repair of DNA breaks: recognizes and binds DNA breaks within chromatin and recruits HPF1, licensing serine ADP-ribosylation of target proteins, such as histones (H2BS6ADPr and H3S10ADPr), thereby promoting decompaction of chromatin and the recruitment of repair factors leading to the reparation of DNA strand breaks. HPF1 initiates serine ADP-ribosylation but restricts the polymerase activity of PARP1 in order to limit the length of poly-ADP-ribose chains. In addition to base excision repair (BER) pathway, also involved in double-strand breaks (DSBs) repair: together with TIMELESS, accumulates at DNA damage sites and promotes homologous recombination repair by mediating poly-ADP-ribosylation. Mediates the poly-ADP-ribosylation of a number of proteins, including itself, APLF, CHFR and NFAT5. In addition to proteins, also able to ADP-ribosylate DNA: catalyzes ADP-ribosylation of DNA strand break termini containing terminal phosphates and a 2'-OH group in single- and double-stranded DNA, respectively. Required for PARP9 and DTX3L recruitment to DNA damage sites. PARP1-dependent PARP9-DTX3L-mediated ubiquitination promotes the rapid and specific recruitment of 53BP1/TP53BP1, UIMC1/RAP80, and BRCA1 to DNA damage sites. PARP1-mediated DNA repair in neurons plays a role in sleep: senses DNA damage in neurons and promotes sleep, facilitating efficient DNA repair. In addition to DNA repair, also involved in other processes, such as transcription regulation, programmed cell death, membrane repair, adipogenesis and innate immunity. Acts as a repressor of transcription: binds to nucleosomes and modulates chromatin structure in a manner similar to histone H1, thereby altering RNA polymerase II. Acts both as a positive and negative regulator of transcription elongation, depending on the context. Acts as a positive regulator of transcription elongation by mediating poly-ADP-ribosylation of NELFE, preventing RNA-binding activity of NELFE and relieving transcription pausing. Acts as a negative regulator of transcription elongation in response to DNA damage by catalyzing poly-ADP-ribosylation of CCNT1, disrupting the phase separation activity of CCNT1 and subsequent activation of CDK9. Involved in replication fork progression following interaction with CARM1: mediates poly-ADP-ribosylation at replication forks, slowing fork progression. Poly-ADP-ribose chains generated by PARP1 also play a role in poly-ADP-ribose-dependent cell death, a process named parthanatos. Also acts as a negative regulator of the cGAS-STING pathway. Acts by mediating poly-ADP-ribosylation of CGAS: PARP1 translocates into the cytosol following phosphorylation by PRKDC and catalyzes poly-ADP-ribosylation and inactivation of CGAS. Acts as a negative regulator of adipogenesis: catalyzes poly-ADP-ribosylation of histone H2B on 'Glu-35' (H2BE35ADPr) following interaction with NMNAT1, inhibiting phosphorylation of H2B at 'Ser-36' (H2BS36ph), thereby blocking expression of pro-adipogenetic genes. Involved in the synthesis of ATP in the nucleus, together with NMNAT1, PARG and NUDT5. Nuclear ATP generation is required for extensive chromatin remodeling events that are energy-consuming. Promotes AIFM1-mediated apoptosis. This form, which translocates into the cytoplasm following cleavage by caspase-3 (CASP3) and caspase-7 (CASP7) in response to apoptosis, is auto-poly-ADP-ribosylated and serves as a poly-ADP-ribose carrier to induce AIFM1-mediated apoptosis. In terms of biological role, this cleavage form irreversibly binds to DNA breaks and interferes with DNA repair, promoting DNA damage-induced apoptosis. The polypeptide is Poly [ADP-ribose] polymerase 1 (Parp1) (Mus musculus (Mouse)).